A 300-amino-acid chain; its full sequence is tRNA pseudouridine synthase A (300 aa).

Catalysis depends on Asp67, which acts as the Nucleophile. Tyr125 provides a ligand contact to substrate.

This sequence belongs to the tRNA pseudouridine synthase TruA family. As to quaternary structure, homodimer.

The catalysed reaction is uridine(38/39/40) in tRNA = pseudouridine(38/39/40) in tRNA. Its function is as follows. Formation of pseudouridine at positions 38, 39 and 40 in the anticodon stem and loop of transfer RNAs. The polypeptide is tRNA pseudouridine synthase A (Synechococcus sp. (strain CC9902)).